Reading from the N-terminus, the 385-residue chain is tRNA-specific 2-thiouridylase MnmA (385 aa).

ATP is bound by residues A18–S25 and L44. The Nucleophile role is filled by C112. C112 and C209 are disulfide-bonded. Residue G136 participates in ATP binding. The segment at R159–Q161 is interaction with tRNA. C209 serves as the catalytic Cysteine persulfide intermediate.

Belongs to the MnmA/TRMU family.

Its subcellular location is the cytoplasm. The catalysed reaction is S-sulfanyl-L-cysteinyl-[protein] + uridine(34) in tRNA + AH2 + ATP = 2-thiouridine(34) in tRNA + L-cysteinyl-[protein] + A + AMP + diphosphate + H(+). Catalyzes the 2-thiolation of uridine at the wobble position (U34) of tRNA, leading to the formation of s(2)U34. The protein is tRNA-specific 2-thiouridylase MnmA of Methylorubrum extorquens (strain PA1) (Methylobacterium extorquens).